The primary structure comprises 215 residues: CASP-like protein 1E1 (215 aa).

At 1–51 (MESSRGKPGLNGSGGGAAAFDYSSRRGYYTGAGAALPPLAAGSRAPPVDPC) the chain is on the cytoplasmic side. The chain crosses the membrane as a helical span at residues 52–72 (CVALRVFVLLGTLASAVVMAA). At 73-103 (DRQSTTVQIAAGEQLAPPLRVPVTAKWTYSS) the chain is on the extracellular side. Residues 104–124 (AFVYFVVANAMVFAFSAAALA) form a helical membrane-spanning segment. The Cytoplasmic segment spans residues 125 to 130 (AVRRRS). Residues 131–151 (AVVPVMVGDLVAMALLFSAVG) form a helical membrane-spanning segment. Residues 152–185 (AAAQFGLLGERGNAHVRWAKVCDVYGPFCERAMA) lie on the Extracellular side of the membrane. Residues 186 to 206 (AVVVALIAAFADLVLLMLTIL) form a helical membrane-spanning segment. Residues 207–215 (TIHKASSYY) are Cytoplasmic-facing.

Belongs to the Casparian strip membrane proteins (CASP) family. As to quaternary structure, homodimer and heterodimers.

The protein localises to the cell membrane. The polypeptide is CASP-like protein 1E1 (Oryza sativa subsp. indica (Rice)).